A 571-amino-acid polypeptide reads, in one-letter code: Cytosolic Fe-S cluster assembly factor NAR1 (571 aa).

6 residues coordinate [4Fe-4S] cluster: Cys-20, Cys-62, Cys-65, Cys-68, Cys-204, and Cys-259. The tract at residues Ala-415–Ser-437 is disordered. Cys-449 and Cys-453 together coordinate [4Fe-4S] cluster.

This sequence belongs to the NARF family.

In terms of biological role, component of the cytosolic Fe/S protein assembly machinery. Required for maturation of extramitochondrial Fe/S proteins. May play a role in the transfer of pre-assembled Fe/S clusters to target apoproteins. This is Cytosolic Fe-S cluster assembly factor NAR1 (NAR1) from Sclerotinia sclerotiorum (strain ATCC 18683 / 1980 / Ss-1) (White mold).